Consider the following 483-residue polypeptide: Phosphomethylpyrimidine synthase (483 aa).

Residues asparagine 97, methionine 126, tyrosine 156, histidine 192, 212 to 214, 253 to 256, and glutamate 292 each bind substrate; these read SRG and DSLR. Histidine 296 serves as a coordination point for Zn(2+). Tyrosine 319 contributes to the substrate binding site. Histidine 360 lines the Zn(2+) pocket. Residues cysteine 440, cysteine 443, and cysteine 448 each coordinate [4Fe-4S] cluster.

Belongs to the ThiC family. [4Fe-4S] cluster serves as cofactor.

The catalysed reaction is 5-amino-1-(5-phospho-beta-D-ribosyl)imidazole + S-adenosyl-L-methionine = 4-amino-2-methyl-5-(phosphooxymethyl)pyrimidine + CO + 5'-deoxyadenosine + formate + L-methionine + 3 H(+). It functions in the pathway cofactor biosynthesis; thiamine diphosphate biosynthesis. Its function is as follows. Catalyzes the synthesis of the hydroxymethylpyrimidine phosphate (HMP-P) moiety of thiamine from aminoimidazole ribotide (AIR) in a radical S-adenosyl-L-methionine (SAM)-dependent reaction. In Parasynechococcus marenigrum (strain WH8102), this protein is Phosphomethylpyrimidine synthase.